The sequence spans 95 residues: Co-chaperonin GroES (95 aa).

It belongs to the GroES chaperonin family. In terms of assembly, heptamer of 7 subunits arranged in a ring. Interacts with the chaperonin GroEL.

The protein localises to the cytoplasm. In terms of biological role, together with the chaperonin GroEL, plays an essential role in assisting protein folding. The GroEL-GroES system forms a nano-cage that allows encapsulation of the non-native substrate proteins and provides a physical environment optimized to promote and accelerate protein folding. GroES binds to the apical surface of the GroEL ring, thereby capping the opening of the GroEL channel. This chain is Co-chaperonin GroES, found in Nitratidesulfovibrio vulgaris (strain ATCC 29579 / DSM 644 / CCUG 34227 / NCIMB 8303 / VKM B-1760 / Hildenborough) (Desulfovibrio vulgaris).